We begin with the raw amino-acid sequence, 162 residues long: Phenazine biosynthesis protein PhzA1 (162 aa).

Belongs to the PhzA/PhzB family.

It functions in the pathway antibiotic biosynthesis; phenazine biosynthesis. Functionally, involved in the biosynthesis of the antibiotic phenazine, a nitrogen-containing heterocyclic molecule. PhzA1 (operon phzA1B1C1E1F1G1) has a role in the biosynthesis of the phenazine during planktonic growth. This Pseudomonas aeruginosa (strain ATCC 15692 / DSM 22644 / CIP 104116 / JCM 14847 / LMG 12228 / 1C / PRS 101 / PAO1) protein is Phenazine biosynthesis protein PhzA1.